A 223-amino-acid polypeptide reads, in one-letter code: Triosephosphate isomerase (223 aa).

10–12 (NFK) provides a ligand contact to substrate. Residue H94 is the Electrophile of the active site. E142 acts as the Proton acceptor in catalysis. Residues I147, G182, and 203 to 204 (AS) each bind substrate.

It belongs to the triosephosphate isomerase family. As to quaternary structure, homotetramer; dimer of dimers.

The protein localises to the cytoplasm. The enzyme catalyses D-glyceraldehyde 3-phosphate = dihydroxyacetone phosphate. The protein operates within carbohydrate biosynthesis; gluconeogenesis. It participates in carbohydrate degradation; glycolysis; D-glyceraldehyde 3-phosphate from glycerone phosphate: step 1/1. Functionally, involved in the gluconeogenesis. Catalyzes stereospecifically the conversion of dihydroxyacetone phosphate (DHAP) to D-glyceraldehyde-3-phosphate (G3P). The protein is Triosephosphate isomerase of Archaeoglobus fulgidus (strain ATCC 49558 / DSM 4304 / JCM 9628 / NBRC 100126 / VC-16).